Consider the following 541-residue polypeptide: Chaperonin GroEL (541 aa).

Residues 29–32 (TLGP), 86–90 (DGTTT), Gly413, 476–478 (NAA), and Asp492 contribute to the ATP site.

It belongs to the chaperonin (HSP60) family. As to quaternary structure, forms a cylinder of 14 subunits composed of two heptameric rings stacked back-to-back. Interacts with the co-chaperonin GroES.

The protein resides in the cytoplasm. The enzyme catalyses ATP + H2O + a folded polypeptide = ADP + phosphate + an unfolded polypeptide.. Its function is as follows. Together with its co-chaperonin GroES, plays an essential role in assisting protein folding. The GroEL-GroES system forms a nano-cage that allows encapsulation of the non-native substrate proteins and provides a physical environment optimized to promote and accelerate protein folding. This is Chaperonin GroEL from Streptococcus equi subsp. zooepidemicus (strain H70).